A 324-amino-acid polypeptide reads, in one-letter code: UDP-N-acetylenolpyruvoylglucosamine reductase (324 aa).

Residues 38–231 form the FAD-binding PCMH-type domain; the sequence is AGGSARRLYV…SRERIRSLLK (194 aa). Residue arginine 195 is part of the active site. The active-site Proton donor is serine 246. Glutamate 316 is an active-site residue.

The protein belongs to the MurB family. Requires FAD as cofactor.

The protein localises to the cytoplasm. The enzyme catalyses UDP-N-acetyl-alpha-D-muramate + NADP(+) = UDP-N-acetyl-3-O-(1-carboxyvinyl)-alpha-D-glucosamine + NADPH + H(+). The protein operates within cell wall biogenesis; peptidoglycan biosynthesis. Cell wall formation. The chain is UDP-N-acetylenolpyruvoylglucosamine reductase from Thiobacillus denitrificans (strain ATCC 25259 / T1).